We begin with the raw amino-acid sequence, 886 residues long: Translation initiation factor IF-2 (886 aa).

3 disordered regions span residues 1-25 (MSET…LKRP), 50-229 (RRAL…PAEE), and 253-272 (KGAE…TGDE). The span at 50–60 (RRALGEPHVLR) shows a compositional bias: basic and acidic residues. Residues 63–73 (APALDVVAPAP) show a composition bias toward low complexity. A compositionally biased stretch (pro residues) spans 74–83 (QAAPPAPTQQ). A compositionally biased stretch (low complexity) spans 84–106 (PQPRVASRPQPQQRSSSGVILRS). The span at 107–181 (LTEEEREARS…KRRSESEAKR (75 aa)) shows a compositional bias: basic and acidic residues. Over residues 185–225 (GGEPAPAGANAAPRKAPALSAAPGSAAPSGQPGPAGAVGAR) the composition is skewed to low complexity. The tr-type G domain maps to 383–553 (SRPPVVTIMG…ALQAELLDLK (171 aa)). The tract at residues 392–399 (GHVDHGKT) is G1. Position 392-399 (392-399 (GHVDHGKT)) interacts with GTP. Residues 417–421 (GITQH) are G2. Residues 439 to 442 (DTPG) are G3. GTP contacts are provided by residues 439 to 443 (DTPGH) and 493 to 496 (NKID). Positions 493 to 496 (NKID) are G4. Residues 529–531 (SAT) form a G5 region.

It belongs to the TRAFAC class translation factor GTPase superfamily. Classic translation factor GTPase family. IF-2 subfamily.

It is found in the cytoplasm. Its function is as follows. One of the essential components for the initiation of protein synthesis. Protects formylmethionyl-tRNA from spontaneous hydrolysis and promotes its binding to the 30S ribosomal subunits. Also involved in the hydrolysis of GTP during the formation of the 70S ribosomal complex. In Methylocella silvestris (strain DSM 15510 / CIP 108128 / LMG 27833 / NCIMB 13906 / BL2), this protein is Translation initiation factor IF-2.